A 367-amino-acid polypeptide reads, in one-letter code: DNA replication and repair protein RecF (367 aa).

30-37 (GANGSGKT) lines the ATP pocket.

It belongs to the RecF family.

It localises to the cytoplasm. Its function is as follows. The RecF protein is involved in DNA metabolism; it is required for DNA replication and normal SOS inducibility. RecF binds preferentially to single-stranded, linear DNA. It also seems to bind ATP. The protein is DNA replication and repair protein RecF of Pseudomonas putida (strain GB-1).